Consider the following 275-residue polypeptide: TATA-box-binding protein (275 aa).

2 disordered regions span residues glutamate 23–asparagine 45 and glycine 73–alanine 92. 2 tandem repeats follow at residues leucine 103 to valine 179 and isoleucine 193 to leucine 270.

The protein belongs to the TBP family. Belongs to the TFIID complex together with the TBP-associated factors (TAFs). Binds DNA as monomer.

Its subcellular location is the nucleus. In terms of biological role, general transcription factor that functions at the core of the DNA-binding multiprotein factor TFIID. Binding of TFIID to the TATA box is the initial transcriptional step of the pre-initiation complex (PIC), playing a role in the activation of eukaryotic genes transcribed by RNA polymerase II. The polypeptide is TATA-box-binding protein (Artemia franciscana (Brine shrimp)).